A 258-amino-acid polypeptide reads, in one-letter code: MLIVLSPAKSLDYKTPIKVKAPTLPEFASESAKLIAELKKLAPQDVAKLMSLSDQLAVLNVGRYRDWSKKFTVDNSKPAIYAFDGDVYDGFDVKSLNTKAIDFAQDHVRILSGLYGVLRPLDLMQAYRLEMGTSLKNIRGKDLYAFWGGRVTDSLKALLGKQKKPVLLNLASEEYFKVLQPKELDCPVIAPIFQDAKDGKYKIISFYAKRARGLMARYVVENRITDPEDLKGFNLDGYKYFAAESKIDKPVFRRAERK.

It belongs to the UPF0246 family.

This is UPF0246 protein Pnuc_0753 from Polynucleobacter asymbioticus (strain DSM 18221 / CIP 109841 / QLW-P1DMWA-1) (Polynucleobacter necessarius subsp. asymbioticus).